The primary structure comprises 909 residues: Protein translocase subunit SecA (909 aa).

Residues Gln87, 105 to 109 (GEGKT), and Asp513 each bind ATP. Residues 834–909 (QEEVERMEEQ…KYKQCHGKID (76 aa)) form a disordered region. Basic and acidic residues predominate over residues 836 to 853 (EVERMEEQRRAQAEEAAR). Residues 854-863 (RAQAQHAAAQ) show a composition bias toward low complexity. A compositionally biased stretch (basic and acidic residues) spans 874-889 (EGAHQPMVREERKVGR). Zn(2+) is bound by residues Cys893, Cys895, Cys904, and His905. A compositionally biased stretch (basic residues) spans 899 to 909 (KKYKQCHGKID).

This sequence belongs to the SecA family. Monomer and homodimer. Part of the essential Sec protein translocation apparatus which comprises SecA, SecYEG and auxiliary proteins SecDF-YajC and YidC. Zn(2+) is required as a cofactor.

It is found in the cell inner membrane. The protein localises to the cytoplasm. It catalyses the reaction ATP + H2O + cellular proteinSide 1 = ADP + phosphate + cellular proteinSide 2.. Part of the Sec protein translocase complex. Interacts with the SecYEG preprotein conducting channel. Has a central role in coupling the hydrolysis of ATP to the transfer of proteins into and across the cell membrane, serving both as a receptor for the preprotein-SecB complex and as an ATP-driven molecular motor driving the stepwise translocation of polypeptide chains across the membrane. This chain is Protein translocase subunit SecA, found in Vibrio campbellii (strain ATCC BAA-1116).